We begin with the raw amino-acid sequence, 607 residues long: Elongation factor 4 (607 aa).

In terms of domain architecture, tr-type G spans 11–193 (KNIRNFSIIA…KIVETIPAPS (183 aa)). Residues 23–28 (DHGKST) and 140–143 (NKID) contribute to the GTP site.

Belongs to the TRAFAC class translation factor GTPase superfamily. Classic translation factor GTPase family. LepA subfamily.

Its subcellular location is the cell membrane. The catalysed reaction is GTP + H2O = GDP + phosphate + H(+). In terms of biological role, required for accurate and efficient protein synthesis under certain stress conditions. May act as a fidelity factor of the translation reaction, by catalyzing a one-codon backward translocation of tRNAs on improperly translocated ribosomes. Back-translocation proceeds from a post-translocation (POST) complex to a pre-translocation (PRE) complex, thus giving elongation factor G a second chance to translocate the tRNAs correctly. Binds to ribosomes in a GTP-dependent manner. The chain is Elongation factor 4 from Staphylococcus carnosus (strain TM300).